A 317-amino-acid polypeptide reads, in one-letter code: Inositol oxygenase 2 (317 aa).

Residues R57 and D115–S117 contribute to the substrate site. Residues H128, H153, and D154 each contribute to the Fe cation site. Substrate-binding positions include K157 and G174–D175. The Fe cation site is built by H226, H252, and D285. H252–S253 is a substrate binding site.

This sequence belongs to the myo-inositol oxygenase family. Requires Fe cation as cofactor. Expressed mainly in roots, stems, flowers and siliques. Low expression in leaves.

Its subcellular location is the cytoplasm. It catalyses the reaction myo-inositol + O2 = D-glucuronate + H2O + H(+). It functions in the pathway polyol metabolism; myo-inositol degradation into D-glucuronate; D-glucuronate from myo-inositol: step 1/1. Its function is as follows. Involved in the biosynthesis of UDP-glucuronic acid (UDP-GlcA), providing nucleotide sugars for cell-wall polymers. May be also involved in plant ascorbate biosynthesis. The polypeptide is Inositol oxygenase 2 (MIOX2) (Arabidopsis thaliana (Mouse-ear cress)).